The sequence spans 380 residues: Actin-like protein arp10 (380 aa).

This sequence belongs to the actin family. ARP10 subfamily.

It is found in the cytoplasm. Its subcellular location is the cytoskeleton. It localises to the nucleus. This chain is Actin-like protein arp10 (arp10), found in Schizosaccharomyces pombe (strain 972 / ATCC 24843) (Fission yeast).